Consider the following 298-residue polypeptide: Inosose dehydratase (298 aa).

Belongs to the IolE/MocC family. Glutathione is required as a cofactor. Co(2+) serves as cofactor. It depends on Mn(2+) as a cofactor.

The catalysed reaction is scyllo-inosose = 3D-3,5/4-trihydroxycyclohexane-1,2-dione + H2O. It participates in polyol metabolism; myo-inositol degradation into acetyl-CoA; acetyl-CoA from myo-inositol: step 2/7. Functionally, catalyzes the dehydration of inosose (2-keto-myo-inositol, 2KMI or 2,4,6/3,5-pentahydroxycyclohexanone) to 3D-(3,5/4)-trihydroxycyclohexane-1,2-dione (D-2,3-diketo-4-deoxy-epi-inositol). The polypeptide is Inosose dehydratase (Bacillus velezensis (strain DSM 23117 / BGSC 10A6 / LMG 26770 / FZB42) (Bacillus amyloliquefaciens subsp. plantarum)).